We begin with the raw amino-acid sequence, 90 residues long: Serine-rich and transmembrane domain-containing 2 (90 aa).

An N-linked (GlcNAc...) asparagine glycan is attached at Asn11. Residues 38-58 form a helical membrane-spanning segment; sequence YVGLFLSLLAILLILLFTMLL. The disordered stretch occupies residues 69–90; sequence SDSTESVPQFTDVEMQSRIPTP.

It is found in the membrane. This is Serine-rich and transmembrane domain-containing 2 from Homo sapiens (Human).